Consider the following 350-residue polypeptide: Vetispiradiene synthase 3 (350 aa).

Positions 103, 107, 246, 250, and 254 each coordinate Mg(2+). Residues 103–107 (DDTFD) carry the DDXXD motif motif.

Belongs to the terpene synthase family. Tpsa subfamily. It depends on Mg(2+) as a cofactor.

Its subcellular location is the cytoplasm. The enzyme catalyses (2E,6E)-farnesyl diphosphate = (-)-vetispiradiene + diphosphate. It functions in the pathway secondary metabolite biosynthesis; terpenoid biosynthesis. Functionally, sesquiterpene synthase that catalyzes the formation of vetispiradiene from trans,trans-farnesyl diphosphate. The initial internal cyclization produces the monocyclic intermediate germacrene A. The protein is Vetispiradiene synthase 3 of Hyoscyamus muticus (Egyptian henbane).